We begin with the raw amino-acid sequence, 29 residues long: Cyclotide mden-C (29 aa).

Residues 1 to 29 (GKPICGETCFKGKCYTPGCTCSYPVCKKN) constitute a cross-link (cyclopeptide (Gly-Asn)). Cystine bridges form between C5/C19, C9/C21, and C14/C26.

It belongs to the cyclotide family. This is a cyclic peptide.

Functionally, probably participates in a plant defense mechanism. This is Cyclotide mden-C from Melicytus dentatus (Tree violet).